Reading from the N-terminus, the 557-residue chain is Tryptophan 2-monooxygenase (557 aa).

FMN-binding residues include Ser49, Glu69, Arg71, Arg77, and Arg98. A substrate-binding site is contributed by Arg98.

Belongs to the tryptophan 2-monooxygenase family. In terms of assembly, monomer. Requires FMN as cofactor.

The enzyme catalyses L-tryptophan + O2 = indole-3-acetamide + CO2 + H2O. The protein operates within plant hormone metabolism; auxin biosynthesis. In Pseudomonas savastanoi (Pseudomonas syringae pv. savastanoi), this protein is Tryptophan 2-monooxygenase (iaaM).